The sequence spans 232 residues: Urease accessory protein UreF (232 aa).

This sequence belongs to the UreF family. As to quaternary structure, ureD, UreF and UreG form a complex that acts as a GTP-hydrolysis-dependent molecular chaperone, activating the urease apoprotein by helping to assemble the nickel containing metallocenter of UreC. The UreE protein probably delivers the nickel.

It is found in the cytoplasm. In terms of biological role, required for maturation of urease via the functional incorporation of the urease nickel metallocenter. This is Urease accessory protein UreF from Trichodesmium erythraeum (strain IMS101).